The sequence spans 214 residues: Metalloproteinase inhibitor 3 (214 aa).

Residues 1–26 (MSVCALTLILGCFLLFLGDISKPAEG) form the signal peptide. Cys27 contributes to the Zn(2+) binding site. Involved in metalloproteinase-binding stretches follow at residues 27 to 30 (CTCA) and 91 to 92 (ES). 6 disulfides stabilise this stretch: Cys27–Cys94, Cys29–Cys121, Cys39–Cys146, Cys148–Cys195, Cys153–Cys158, and Cys166–Cys187. Residues 27-146 (CTCAPSHPQD…GLNHRYPLGC (120 aa)) form the NTR domain.

It belongs to the protease inhibitor I35 (TIMP) family.

The protein localises to the secreted. It is found in the extracellular space. Its subcellular location is the extracellular matrix. In terms of biological role, complexes with metalloproteinases (such as collagenases) and irreversibly inactivates them by binding to their catalytic zinc cofactor. May form part of a tissue-specific acute response to remodeling stimuli. This is Metalloproteinase inhibitor 3 (timp3) from Xenopus laevis (African clawed frog).